Here is a 561-residue protein sequence, read N- to C-terminus: Hemolysin transporter protein HpmB (561 aa).

The N-terminal stretch at 1–17 (MKKKVVLLTLLSCFSTS) is a signal peptide. Positions 77 to 150 (LPIKGVYIQG…GELGLYAIEG (74 aa)) constitute a POTRA domain.

It belongs to the TPS (TC 1.B.20) family.

It is found in the cell outer membrane. In terms of biological role, interacts with the cell-bound hemolysin. Necessary for the extracellular secretion and activation of the hemolysin. Probable member of a two partner secretion pathway (TPS) in which it mediates the secretion of hemolysin. In Proteus mirabilis, this protein is Hemolysin transporter protein HpmB (hpmB).